The following is a 212-amino-acid chain: ER lumen protein-retaining receptor 2 (212 aa).

Topologically, residues 1–4 (MNIF) are lumenal. The chain crosses the membrane as a helical span at residues 5–24 (RLTGDLSHLAAIVILLLKIW). The Cytoplasmic segment spans residues 25–32 (KTRSCAGI). The helical transmembrane segment at 33–52 (SGKSQLLFALVFTTRYLDLF) threads the bilayer. An interaction with the K-D-E-L motif on target proteins region spans residues 47–48 (RY). Topologically, residues 53–58 (TSFISL) are lumenal. The chain crosses the membrane as a helical span at residues 59 to 79 (YNTSMKLIYIACSYATVYLIY). The Cytoplasmic portion of the chain corresponds to 80-92 (MKFKATYDGNHDT). The helical transmembrane segment at 93 to 110 (FRVEFLVVPVGGLSFLVN) threads the bilayer. The Lumenal portion of the chain corresponds to 111–116 (HDFSPL). A helical membrane pass occupies residues 117–135 (EILWTFSIYLESVAILPQL). Over 136–149 (FMISKTGEAETITT) the chain is Cytoplasmic. Residues 150–168 (HYLFFLGLYRALYLVNWIW) form a helical membrane-spanning segment. The tract at residues 159–169 (RALYLVNWIWR) is interaction with the K-D-E-L motif on target proteins. Residues 169–178 (RFYFEGFFDL) lie on the Lumenal side of the membrane. The chain crosses the membrane as a helical span at residues 179–199 (IAVVAGVVQTILYCDFFYLYI). Topologically, residues 200–212 (TKVLKGKKLSLPA) are cytoplasmic. An important for recycling of cargo proteins with the sequence motif K-D-E-L from the Golgi to the endoplasmic reticulum region spans residues 204 to 207 (KGKK).

This sequence belongs to the ERD2 family.

It is found in the endoplasmic reticulum membrane. It localises to the golgi apparatus membrane. The protein localises to the cytoplasmic vesicle. The protein resides in the COPI-coated vesicle membrane. Functionally, membrane receptor that binds the K-D-E-L sequence motif in the C-terminal part of endoplasmic reticulum resident proteins and maintains their localization in that compartment by participating to their vesicle-mediated recycling back from the Golgi. Binding is pH dependent, and is optimal at pH 5-5.4. The polypeptide is ER lumen protein-retaining receptor 2 (Kdelr2) (Mus musculus (Mouse)).